The chain runs to 200 residues: NAD(P)H dehydrogenase (quinone) (200 aa).

The Flavodoxin-like domain maps to 4 to 191 (VLVLYYSSYG…DIARYQGKHV (188 aa)). FMN contacts are provided by residues 10–15 (SSYGHV) and 79–81 (TRF). NAD(+) is bound at residue Y12. W99 lines the substrate pocket. Residues 114–120 (STGTQHG) and H135 each bind FMN.

The protein belongs to the WrbA family. It depends on FMN as a cofactor.

It catalyses the reaction a quinone + NADH + H(+) = a quinol + NAD(+). The catalysed reaction is a quinone + NADPH + H(+) = a quinol + NADP(+). The chain is NAD(P)H dehydrogenase (quinone) from Burkholderia cenocepacia (strain HI2424).